Consider the following 258-residue polypeptide: Imidazole glycerol phosphate synthase subunit HisF (258 aa).

Residues aspartate 11 and aspartate 130 contribute to the active site.

The protein belongs to the HisA/HisF family. As to quaternary structure, heterodimer of HisH and HisF.

Its subcellular location is the cytoplasm. The enzyme catalyses 5-[(5-phospho-1-deoxy-D-ribulos-1-ylimino)methylamino]-1-(5-phospho-beta-D-ribosyl)imidazole-4-carboxamide + L-glutamine = D-erythro-1-(imidazol-4-yl)glycerol 3-phosphate + 5-amino-1-(5-phospho-beta-D-ribosyl)imidazole-4-carboxamide + L-glutamate + H(+). It functions in the pathway amino-acid biosynthesis; L-histidine biosynthesis; L-histidine from 5-phospho-alpha-D-ribose 1-diphosphate: step 5/9. Its function is as follows. IGPS catalyzes the conversion of PRFAR and glutamine to IGP, AICAR and glutamate. The HisF subunit catalyzes the cyclization activity that produces IGP and AICAR from PRFAR using the ammonia provided by the HisH subunit. This is Imidazole glycerol phosphate synthase subunit HisF from Shigella flexneri serotype 5b (strain 8401).